Consider the following 113-residue polypeptide: Large ribosomal subunit protein eL33 (113 aa).

This sequence belongs to the eukaryotic ribosomal protein eL33 family.

The sequence is that of Large ribosomal subunit protein eL33 (RPL35A) from Tetrahymena thermophila (strain SB210).